Reading from the N-terminus, the 210-residue chain is Large ribosomal subunit protein uL4 (210 aa).

A compositionally biased stretch (polar residues) spans 41 to 51 (ANARQGTQSTK). Disordered regions lie at residues 41 to 60 (ANAR…QGSS) and 67 to 98 (KGTG…DFSK).

The protein belongs to the universal ribosomal protein uL4 family. As to quaternary structure, part of the 50S ribosomal subunit.

One of the primary rRNA binding proteins, this protein initially binds near the 5'-end of the 23S rRNA. It is important during the early stages of 50S assembly. It makes multiple contacts with different domains of the 23S rRNA in the assembled 50S subunit and ribosome. Its function is as follows. Forms part of the polypeptide exit tunnel. The polypeptide is Large ribosomal subunit protein uL4 (Dehalococcoides mccartyi (strain ATCC BAA-2266 / KCTC 15142 / 195) (Dehalococcoides ethenogenes (strain 195))).